A 179-amino-acid chain; its full sequence is Large ribosomal subunit protein uL5 (179 aa).

This sequence belongs to the universal ribosomal protein uL5 family. In terms of assembly, part of the 50S ribosomal subunit; part of the 5S rRNA/L5/L18/L25 subcomplex. Contacts the 5S rRNA and the P site tRNA. Forms a bridge to the 30S subunit in the 70S ribosome.

This is one of the proteins that bind and probably mediate the attachment of the 5S RNA into the large ribosomal subunit, where it forms part of the central protuberance. In the 70S ribosome it contacts protein S13 of the 30S subunit (bridge B1b), connecting the 2 subunits; this bridge is implicated in subunit movement. Contacts the P site tRNA; the 5S rRNA and some of its associated proteins might help stabilize positioning of ribosome-bound tRNAs. This Exiguobacterium sibiricum (strain DSM 17290 / CCUG 55495 / CIP 109462 / JCM 13490 / 255-15) protein is Large ribosomal subunit protein uL5.